Here is a 617-residue protein sequence, read N- to C-terminus: Electron transfer flavoprotein-ubiquinone oxidoreductase, mitochondrial (617 aa).

The N-terminal 33 residues, 1-33 (MLVPLAKLSCLAYQCFHALKIKKNYLPLCATRW), are a transit peptide targeting the mitochondrion. 71–85 (VVIVGAGPAGLSAAV) provides a ligand contact to FAD. K96 carries the post-translational modification N6-acetyllysine. Residues 109–130 (IGAHTLSGACLDPGAFKELFPD) lie within the membrane without spanning it. N6-acetyllysine occurs at positions 132 and 223. G305 and G306 together coordinate a ubiquinone. K357 bears the N6-acetyllysine mark. An intramembrane segment occupies 428–447 (IGLHVTEYEDNLKNSWVWKE). S551 is subject to Phosphoserine. [4Fe-4S] cluster contacts are provided by C561, C586, C589, and C592. The region spanning 577–606 (FRLQINAQNCVHCKTCDIKDPSQNINWVVP) is the 4Fe-4S ferredoxin-type domain.

It belongs to the ETF-QO/FixC family. In terms of assembly, monomer. The cofactor is [4Fe-4S] cluster. It depends on FAD as a cofactor.

Its subcellular location is the mitochondrion inner membrane. It carries out the reaction a ubiquinone + reduced [electron-transfer flavoprotein] = a ubiquinol + oxidized [electron-transfer flavoprotein] + H(+). Accepts electrons from ETF and reduces ubiquinone. This Homo sapiens (Human) protein is Electron transfer flavoprotein-ubiquinone oxidoreductase, mitochondrial.